A 1557-amino-acid polypeptide reads, in one-letter code: DVA-1 polyprotein (1557 aa).

An N-terminal signal peptide occupies residues 1-21 (MKSTSFITLLLLSYFIVEAHS). Residues 22 to 60 (SIFHWDDERLFKHDDTHSWLTDVQKAELETLKHQPIQLR) constitute a propeptide that is removed on maturation. N-linked (GlcNAc...) asparagine glycosylation is present at Asn-997.

The protein belongs to the NPA family. Post-translationally, nematode polyprotein allergens (NPAs) are synthesized as large polypeptides that are subsequently proteolytically cleaved to active polypeptide units.

Its function is as follows. Has high binding affinity for fatty acids and retinoids. This chain is DVA-1 polyprotein (DVA-1), found in Dictyocaulus viviparus (Bovine lungworm).